We begin with the raw amino-acid sequence, 207 residues long: Shikimate kinase (207 aa).

Residue Gly-32–Thr-37 coordinates ATP. Mg(2+) is bound at residue Ser-36. Positions 54, 78, and 100 each coordinate substrate. An ATP-binding site is contributed by Arg-138. A substrate-binding site is contributed by Arg-157.

It belongs to the shikimate kinase family. Monomer. Mg(2+) serves as cofactor.

The protein resides in the cytoplasm. The catalysed reaction is shikimate + ATP = 3-phosphoshikimate + ADP + H(+). It functions in the pathway metabolic intermediate biosynthesis; chorismate biosynthesis; chorismate from D-erythrose 4-phosphate and phosphoenolpyruvate: step 5/7. Catalyzes the specific phosphorylation of the 3-hydroxyl group of shikimic acid using ATP as a cosubstrate. The sequence is that of Shikimate kinase from Bradyrhizobium diazoefficiens (strain JCM 10833 / BCRC 13528 / IAM 13628 / NBRC 14792 / USDA 110).